Consider the following 466-residue polypeptide: Alpha-1A adrenergic receptor (466 aa).

At M1–K25 the chain is on the extracellular side. Residues N7 and N13 are each glycosylated (N-linked (GlcNAc...) asparagine). The chain crosses the membrane as a helical span at residues A26 to V51. The Cytoplasmic portion of the chain corresponds to A52–Y63. Residues Y64–L89 traverse the membrane as a helical segment. Residues G90–C99 are Extracellular-facing. A helical membrane pass occupies residues N100 to I122. At D123–G143 the chain is on the cytoplasmic side. Residues L144–P168 form a helical membrane-spanning segment. The Extracellular segment spans residues A169–D181. Residues P182–C205 traverse the membrane as a helical segment. The Cytoplasmic segment spans residues R206–K272. The chain crosses the membrane as a helical span at residues T273 to F297. Residues F298–S304 are Extracellular-facing. Residues E305–S329 traverse the membrane as a helical segment. At S330–V466 the chain is on the cytoplasmic side. A Nuclear localization signal motif is present at residues K334–K349. C345 carries the S-palmitoyl cysteine lipid modification.

Belongs to the G-protein coupled receptor 1 family. Adrenergic receptor subfamily. ADRA1A sub-subfamily. As to quaternary structure, homo- and heterooligomer. Heterooligomerizes with ADRA1B homooligomers in cardiac myocytes. Interacts with CAVIN4.

It is found in the nucleus membrane. It localises to the cell membrane. The protein resides in the cytoplasm. The protein localises to the membrane. Its subcellular location is the caveola. This alpha-adrenergic receptor mediates its action by association with G proteins that activate a phosphatidylinositol-calcium second messenger system. Its effect is mediated by G(q) and G(11) proteins. Nuclear ADRA1A-ADRA1B heterooligomers regulate phenylephrine (PE)-stimulated ERK signaling in cardiac myocytes. The chain is Alpha-1A adrenergic receptor (ADRA1A) from Cavia porcellus (Guinea pig).